We begin with the raw amino-acid sequence, 424 residues long: Arogenate dehydratase 1 (424 aa).

A chloroplast-targeting transit peptide spans 1-52 (MQSLTPSSGVNLKSIIRKTSLPPGQTRFITGRVIKCGYQVDSANTVNTAGAP). Positions 131–308 (RVAYQGVPGA…NVTRFVMLAR (178 aa)) constitute a Prephenate dehydratase domain. The ACT domain occupies 321–412 (TSIVFAHEGT…SFLRVLGSYP (92 aa)).

In terms of tissue distribution, mostly expressed in flowers, especially in petals (corollas and tubes), and, at low levels, in roots, stems, leaves, pistils, stamens, ovaries and sepals.

The protein localises to the plastid. The protein resides in the chloroplast stroma. The enzyme catalyses L-arogenate + H(+) = L-phenylalanine + CO2 + H2O. Its pathway is amino-acid biosynthesis; L-phenylalanine biosynthesis; L-phenylalanine from L-arogenate: step 1/1. Its function is as follows. Converts L-arogenate produced from the shikimate-chorismate pathway into phenylalanine (Phe). Involved in floral volatile benzenoids and phenylpropanoids (FVBP) production. In Petunia hybrida (Petunia), this protein is Arogenate dehydratase 1.